The chain runs to 60 residues: Large ribosomal subunit protein uL30 (60 aa).

The protein belongs to the universal ribosomal protein uL30 family. Part of the 50S ribosomal subunit.

In Flavobacterium psychrophilum (strain ATCC 49511 / DSM 21280 / CIP 103535 / JIP02/86), this protein is Large ribosomal subunit protein uL30.